The chain runs to 339 residues: ATPase get3 (339 aa).

33–40 is an ATP binding site; it reads KGGVGKTT. Residue aspartate 62 is part of the active site. 2 residues coordinate ATP: glutamate 244 and asparagine 271. Zn(2+)-binding residues include cysteine 282 and cysteine 285.

This sequence belongs to the arsA ATPase family. As to quaternary structure, homodimer.

It localises to the cytoplasm. Its subcellular location is the endoplasmic reticulum. Its function is as follows. ATPase required for the post-translational delivery of tail-anchored (TA) proteins to the endoplasmic reticulum. Recognizes and selectively binds the transmembrane domain of TA proteins in the cytosol. This complex then targets to the endoplasmic reticulum by membrane-bound receptors, where the tail-anchored protein is released for insertion. This process is regulated by ATP binding and hydrolysis. ATP binding drives the homodimer towards the closed dimer state, facilitating recognition of newly synthesized TA membrane proteins. ATP hydrolysis is required for insertion. Subsequently, the homodimer reverts towards the open dimer state, lowering its affinity for the membrane-bound receptor, and returning it to the cytosol to initiate a new round of targeting. This Aspergillus flavus (strain ATCC 200026 / FGSC A1120 / IAM 13836 / NRRL 3357 / JCM 12722 / SRRC 167) protein is ATPase get3 (get3).